Here is a 211-residue protein sequence, read N- to C-terminus: Thymidylate kinase (211 aa).

Gly-11–Thr-18 is a binding site for ATP.

Belongs to the thymidylate kinase family.

The enzyme catalyses dTMP + ATP = dTDP + ADP. Functionally, phosphorylation of dTMP to form dTDP in both de novo and salvage pathways of dTTP synthesis. In Streptococcus pyogenes serotype M18 (strain MGAS8232), this protein is Thymidylate kinase.